The primary structure comprises 327 residues: Zinc transport protein ZntB (327 aa).

Topologically, residues 1 to 273 are cytoplasmic; sequence MEAIKGSDVN…ARRTYTMSLM (273 aa). Residues 274 to 294 form a helical membrane-spanning segment; it reads AMVFLPSTFLTGLFGVNLGGI. Over 295-300 the chain is Periplasmic; the sequence is PGGGWR. The helical transmembrane segment at 301–321 threads the bilayer; the sequence is FGFSLFCILLVVLIGGVTLWL. The Cytoplasmic segment spans residues 322-327; sequence HRSKWL.

It belongs to the CorA metal ion transporter (MIT) (TC 1.A.35) family.

The protein resides in the cell inner membrane. It carries out the reaction Zn(2+)(out) + H(+)(out) = Zn(2+)(in) + H(+)(in). In terms of biological role, zinc transporter. Acts as a Zn(2+):proton symporter, which likely mediates zinc ion uptake. In Salmonella choleraesuis (strain SC-B67), this protein is Zinc transport protein ZntB.